A 366-amino-acid chain; its full sequence is Peptide chain release factor 2 (366 aa).

An N5-methylglutamine modification is found at glutamine 251.

It belongs to the prokaryotic/mitochondrial release factor family. Post-translationally, methylated by PrmC. Methylation increases the termination efficiency of RF2.

Its subcellular location is the cytoplasm. Peptide chain release factor 2 directs the termination of translation in response to the peptide chain termination codons UGA and UAA. This is Peptide chain release factor 2 (prfB) from Listeria monocytogenes serotype 4b (strain F2365).